Consider the following 722-residue polypeptide: Polyribonucleotide nucleotidyltransferase (722 aa).

Residues Asp486 and Asp492 each coordinate Mg(2+). The region spanning 553–612 (PRITTIQIRPEFIKNVIGPGGKVIKDIIARTGAAINIEDSGRVDIASANGEAVKAAIAMI) is the KH domain. The S1 motif domain occupies 622–690 (GKIYTGTVRK…KTGKIRLSRK (69 aa)). The interval 696–722 (RAAQQGAAAGEAAAQPAPAPTQPDAKA) is disordered.

It belongs to the polyribonucleotide nucleotidyltransferase family. Requires Mg(2+) as cofactor.

The protein localises to the cytoplasm. It carries out the reaction RNA(n+1) + phosphate = RNA(n) + a ribonucleoside 5'-diphosphate. Its function is as follows. Involved in mRNA degradation. Catalyzes the phosphorolysis of single-stranded polyribonucleotides processively in the 3'- to 5'-direction. The sequence is that of Polyribonucleotide nucleotidyltransferase from Myxococcus xanthus (strain DK1622).